Reading from the N-terminus, the 118-residue chain is Small ribosomal subunit protein bTHXc (118 aa).

The N-terminal 55 residues, 1 to 55 (MASLILGAPPRVTVALPSSRLSSSHSETAGVSLSCFTHQFSLSTSSSSSIPLVYC), are a transit peptide targeting the chloroplast. A disordered region spans residues 61–118 (KTAKGKRFNHSFGNARPRNKSKGRGPERVPVPPAPPRKDKFENDEKIKIDIDESLFSN). Over residues 96–111 (PRKDKFENDEKIKIDI) the composition is skewed to basic and acidic residues. A Phosphoserine modification is found at Ser-117.

The protein belongs to the bacterial ribosomal protein bTHX family. In terms of assembly, part of the 30S ribosomal subunit.

It localises to the plastid. The protein localises to the chloroplast. In Arabidopsis thaliana (Mouse-ear cress), this protein is Small ribosomal subunit protein bTHXc (RPS31).